The sequence spans 301 residues: Peptidyl-prolyl cis-trans isomerase E (301 aa).

The RRM domain occupies 5 to 83 (KRVLYVGGLA…GRTIRVNLAK (79 aa)). A phosphoserine mark is found at Ser91, Ser97, and Ser119. The disordered stretch occupies residues 107–140 (GKTLEENKEEEGSEPPKAETQEGEPAAKKARSNP). A PPIase cyclophilin-type domain is found at 143–299 (YMDIKIGNKP…QKVIIADCGE (157 aa)).

It belongs to the cyclophilin-type PPIase family. PPIase E subfamily. As to quaternary structure, identified in the spliceosome C complex. Component of the XAB2 complex, a multimeric protein complex composed of XAB2, PRPF19, AQR, ZNF830, ISY1, and PPIE. Identified in a pentameric intron-binding (IB) complex composed of AQR, XAB2, ISY1, ZNF830 and PPIE that is incorporated into the spliceosome as a preassembled complex. The IB complex does not contain PRPF19. Interacts (via RNA-binding domain) with KMT2A (via the third PHD-type zinc-finger).

It is found in the nucleus. It catalyses the reaction [protein]-peptidylproline (omega=180) = [protein]-peptidylproline (omega=0). Functionally, involved in pre-mRNA splicing as component of the spliceosome. Combines RNA-binding and PPIase activities. Binds mRNA and has a preference for single-stranded RNA molecules with poly-A and poly-U stretches, suggesting it binds to the poly(A)-region in the 3'-UTR of mRNA molecules. Catalyzes the cis-trans isomerization of proline imidic peptide bonds in proteins. Inhibits KMT2A activity; this requires proline isomerase activity. The polypeptide is Peptidyl-prolyl cis-trans isomerase E (PPIE) (Pongo abelii (Sumatran orangutan)).